The primary structure comprises 157 residues: MIKLKNFTELNSQEIELIFKWRNHPDINQFMKTKYIDFEEHLRFLKKLHQDSSKKYFLVFQDEQIIGVIDFVNITTKSCEFGLYAKPNLKGVGQILMNEIIKYAFENLKVNTLKAYVFKDNRKALKLYQQNHFTIYDEDKDFYHICLKQSDCKALPS.

The N-acetyltransferase domain occupies 5-152 (KNFTELNSQE…YHICLKQSDC (148 aa)).

In terms of biological role, catalyzes the third step in the biosynthesis of pseudaminic acid, a sialic-acid-like sugar that is used to modify flagellin. Mediates N-4 acetylation of UDP-4-amino-4,6-dideoxy-beta-L-AltNAc to form UDP-2,4-diacetamido-2,4,6-trideoxy-beta-L-altropyranose. This chain is Acetyltransferase PseH (pseH), found in Campylobacter jejuni subsp. jejuni serotype O:23/36 (strain 81-176).